A 33-amino-acid polypeptide reads, in one-letter code: Omega-conotoxin-like Vn2 (33 aa).

3 disulfides stabilise this stretch: cysteine 3–cysteine 20, cysteine 10–cysteine 24, and cysteine 19–cysteine 28. At proline 33 the chain carries Proline amide.

As to expression, expressed by the venom duct.

The protein resides in the secreted. Functionally, omega-conotoxins act at presynaptic membranes, they bind and block voltage-gated calcium channels (Cav). Has strong insecticidal properties at a dose of only 100 pmol/g of body weight (when injected into the haemocoel of the wax moth G.mellonella larvae). Provoques tremor and uncontrolled movements in insect larvae, that are typical symptoms caused by neurotoxins. On fish G.niger, intraperitoneal injection of the toxin causes full extension of the fins, change in posture, breathing difficulties (at 30 and 100 pmol/g body weight) and death (at 100 pmol/g body weight). This Conus ventricosus (Mediterranean cone) protein is Omega-conotoxin-like Vn2.